The sequence spans 236 residues: Orotidine 5'-phosphate decarboxylase (236 aa).

Residues D17, K39, 66–75 (DLKFYDIPNT), T125, R187, Q196, G216, and R217 contribute to the substrate site. K68 serves as the catalytic Proton donor.

This sequence belongs to the OMP decarboxylase family. Type 1 subfamily. Homodimer.

It carries out the reaction orotidine 5'-phosphate + H(+) = UMP + CO2. It functions in the pathway pyrimidine metabolism; UMP biosynthesis via de novo pathway; UMP from orotate: step 2/2. Its function is as follows. Catalyzes the decarboxylation of orotidine 5'-monophosphate (OMP) to uridine 5'-monophosphate (UMP). The protein is Orotidine 5'-phosphate decarboxylase of Buchnera aphidicola subsp. Baizongia pistaciae (strain Bp).